The following is a 199-amino-acid chain: Prolactin (199 aa).

A disulfide bond links Cys-4 and Cys-11. Residues Ser-26, Ser-34, and Ser-90 each carry the phosphoserine modification. 2 disulfides stabilise this stretch: Cys-58-Cys-174 and Cys-191-Cys-199.

The protein belongs to the somatotropin/prolactin family. As to quaternary structure, interacts with PRLR.

The protein localises to the secreted. Functionally, prolactin acts primarily on the mammary gland by promoting lactation. This is Prolactin (PRL) from Balaenoptera borealis (Sei whale).